A 1064-amino-acid chain; its full sequence is Carbamoyl phosphate synthase large chain (1064 aa).

Positions 1-401 are carboxyphosphate synthetic domain; the sequence is MPKRADIKKI…ALMKAIRSLE (401 aa). Residues Arg129, Arg169, Gly175, Gly176, Lys208, Ile210, Glu215, Gly241, Ile242, His243, Gln284, and Glu298 each coordinate ATP. In terms of domain architecture, ATP-grasp 1 spans 133-327; the sequence is KQLMEALKEP…IAKMAAKIAI (195 aa). Residues Gln284, Glu298, and Asn300 each contribute to the Mg(2+) site. Mn(2+) is bound by residues Gln284, Glu298, and Asn300. The tract at residues 402-546 is oligomerization domain; that stretch reads IGTFALDDLT…YSTYELENES (145 aa). The tract at residues 547 to 929 is carbamoyl phosphate synthetic domain; sequence LKEKRPSVLV…ALYKAFVAAG (383 aa). Residues 671-861 form the ATP-grasp 2 domain; sequence NQVIKKLDLS…LAQLATRVML (191 aa). Arg707, Ser746, Leu748, Glu752, Gly777, Val778, His779, Ser780, Gln820, and Glu832 together coordinate ATP. Mg(2+) contacts are provided by Gln820, Glu832, and Asn834. Positions 820, 832, and 834 each coordinate Mn(2+). One can recognise an MGS-like domain in the interval 930-1064; the sequence is FKVHEHGNVL…VSAINKGDKS (135 aa). An allosteric domain region spans residues 930-1064; that stretch reads FKVHEHGNVL…VSAINKGDKS (135 aa).

Belongs to the CarB family. In terms of assembly, composed of two chains; the small (or glutamine) chain promotes the hydrolysis of glutamine to ammonia, which is used by the large (or ammonia) chain to synthesize carbamoyl phosphate. Tetramer of heterodimers (alpha,beta)4. The cofactor is Mg(2+). Requires Mn(2+) as cofactor.

It catalyses the reaction hydrogencarbonate + L-glutamine + 2 ATP + H2O = carbamoyl phosphate + L-glutamate + 2 ADP + phosphate + 2 H(+). It carries out the reaction hydrogencarbonate + NH4(+) + 2 ATP = carbamoyl phosphate + 2 ADP + phosphate + 2 H(+). The protein operates within amino-acid biosynthesis; L-arginine biosynthesis; carbamoyl phosphate from bicarbonate: step 1/1. It participates in pyrimidine metabolism; UMP biosynthesis via de novo pathway; (S)-dihydroorotate from bicarbonate: step 1/3. Large subunit of the glutamine-dependent carbamoyl phosphate synthetase (CPSase). CPSase catalyzes the formation of carbamoyl phosphate from the ammonia moiety of glutamine, carbonate, and phosphate donated by ATP, constituting the first step of 2 biosynthetic pathways, one leading to arginine and/or urea and the other to pyrimidine nucleotides. The large subunit (synthetase) binds the substrates ammonia (free or transferred from glutamine from the small subunit), hydrogencarbonate and ATP and carries out an ATP-coupled ligase reaction, activating hydrogencarbonate by forming carboxy phosphate which reacts with ammonia to form carbamoyl phosphate. This is Carbamoyl phosphate synthase large chain from Oenococcus oeni (strain ATCC BAA-331 / PSU-1).